Here is a 407-residue protein sequence, read N- to C-terminus: MTMKHQDAFEQIAFGTVDMLPEGEMLARLAAAQRDNRPLRIKLGMDPTAPDLHLGAYVLLHKARQFQDLGHRLLFVIGDFTAMIGDPTGKSVTRKALSREEVVANAATYRPQVFKILDPERTEVMFNSEWLGALRPEELIQIAACYTVARMLERDDFNKRYSANQPIAIHEFLYPLLQGYDSVAIKADVELGGTDQRFNLLVGRELQREYGQKPQLVLTMPILEGLDGVQKMSKSLGNFIAVEDPPAEMFGKIMSISDFLMWRYYALLSRVPAVEQTRLQKEAASGARNPRDIKLDLAGELVRRFHGTAAAQEAHIAFLARFQRHETPEDLPLQAIKLSEAPRLSQLLVQVHLAASTSEAMRKMKEGAVRVDWRRVVDPATILALDAVYLLQFGKRHFARVALQKGE.

The 'HIGH' region signature appears at 47-56; sequence PTAPDLHLGA. The 'KMSKS' region signature appears at 231–235; that stretch reads KMSKS. Lysine 234 contributes to the ATP binding site. Residues 342 to 403 form the S4 RNA-binding domain; it reads PRLSQLLVQV…GKRHFARVAL (62 aa).

This sequence belongs to the class-I aminoacyl-tRNA synthetase family. TyrS type 2 subfamily. In terms of assembly, homodimer.

The protein resides in the cytoplasm. The catalysed reaction is tRNA(Tyr) + L-tyrosine + ATP = L-tyrosyl-tRNA(Tyr) + AMP + diphosphate + H(+). In terms of biological role, catalyzes the attachment of tyrosine to tRNA(Tyr) in a two-step reaction: tyrosine is first activated by ATP to form Tyr-AMP and then transferred to the acceptor end of tRNA(Tyr). This is Tyrosine--tRNA ligase from Acidithiobacillus ferrooxidans (Thiobacillus ferrooxidans).